The sequence spans 343 residues: N-acetyl-gamma-glutamyl-phosphate reductase (343 aa).

The active site involves Cys-147.

Belongs to the NAGSA dehydrogenase family. Type 1 subfamily.

Its subcellular location is the cytoplasm. It carries out the reaction N-acetyl-L-glutamate 5-semialdehyde + phosphate + NADP(+) = N-acetyl-L-glutamyl 5-phosphate + NADPH + H(+). The protein operates within amino-acid biosynthesis; L-arginine biosynthesis; N(2)-acetyl-L-ornithine from L-glutamate: step 3/4. Catalyzes the NADPH-dependent reduction of N-acetyl-5-glutamyl phosphate to yield N-acetyl-L-glutamate 5-semialdehyde. This is N-acetyl-gamma-glutamyl-phosphate reductase from Listeria monocytogenes serovar 1/2a (strain ATCC BAA-679 / EGD-e).